Consider the following 129-residue polypeptide: Small ribosomal subunit protein uS11 (129 aa).

The protein belongs to the universal ribosomal protein uS11 family. As to quaternary structure, part of the 30S ribosomal subunit. Interacts with proteins S7 and S18. Binds to IF-3.

Its function is as follows. Located on the platform of the 30S subunit, it bridges several disparate RNA helices of the 16S rRNA. Forms part of the Shine-Dalgarno cleft in the 70S ribosome. The chain is Small ribosomal subunit protein uS11 from Methylobacterium nodulans (strain LMG 21967 / CNCM I-2342 / ORS 2060).